A 393-amino-acid chain; its full sequence is Stimulated by retinoic acid gene 8 protein (393 aa).

Residues methionine 1–serine 11 show a composition bias toward polar residues. Residues methionine 1–leucine 25 form a disordered region. Residues arginine 28–arginine 33 carry the Nuclear localization signal (NLS) motif. The stretch at glutamine 66–glutamine 95 forms a coiled coil. The tract at residues phenylalanine 124–serine 201 is disordered. The span at aspartate 141–glutamate 192 shows a compositional bias: acidic residues. Positions leucine 209–phenylalanine 218 match the Nuclear export signal (NES) motif.

As to quaternary structure, interacts with XPO1. Interacts with MEIOSIN. Phosphorylated in P19 EC cells. As to expression, expressed exclusively in premeiotic germ cells in both sexes. In females, is expressed in the embryonic ovary. In males, is expressed in pubertal and adult testes, in premeiotic spermatogenic cells. Expressed by some type A and B spermatogonia, preleptotene spermatocytes, and early leptotene spermatocytes (at protein level). Expression begins in late undifferentiated spermatogonia and persists during differentiating spermatogonia (at protein level).

The protein localises to the cytoplasm. The protein resides in the nucleus. Functionally, meiosis-inducer required for the transition into meiosis for both female and male germ cells. In female germ cells, acts downstream of ZGLP1 as a key effector of the meiotic program: required for premeiotic DNA replication and subsequent events in meiotic prophase. During spermatogenesis, next to its role in meiotic initiation, promotes (but is not required for) spermatogonial differentiation. In complex with MEIOSIN, directly activates the transcription of a subset of critical meiotic genes playing a central role in cell-cycle switching from mitosis to meiosis. The polypeptide is Stimulated by retinoic acid gene 8 protein (Mus musculus (Mouse)).